The chain runs to 144 residues: Large ribosomal subunit protein uL14 (144 aa).

This sequence belongs to the universal ribosomal protein uL14 family. Part of the 50S ribosomal subunit. Forms a cluster with proteins L3 and L24e, part of which may contact the 16S rRNA in 2 intersubunit bridges.

Functionally, binds to 23S rRNA. Forms part of two intersubunit bridges in the 70S ribosome. This is Large ribosomal subunit protein uL14 from Cenarchaeum symbiosum (strain A).